The primary structure comprises 570 residues: 4-coumarate--CoA ligase 4 (570 aa).

Positions 218, 219, 220, 221, 222, and 226 each coordinate ATP. Tyrosine 268 is a binding site for (E)-4-coumaroyl-AMP. Arginine 289 lines the CoA pocket. Residues 291-360 (ELNLVMELIQ…LKFPNAIFGQ (70 aa)) form an SBD1 region. Positions 338, 360, 361, and 365 each coordinate (E)-4-coumaroyl-AMP. ATP contacts are provided by glutamine 360, glycine 361, threonine 365, aspartate 448, and arginine 463. Positions 361–427 (GYGMTESGTV…VRGHQLMKGY (67 aa)) are SBD2. (E)-4-coumaroyl-AMP contacts are provided by lysine 465 and lysine 469. 2 residues coordinate CoA: lysine 471 and glycine 472. Lysine 554 contacts ATP.

This sequence belongs to the ATP-dependent AMP-binding enzyme family. Requires Mg(2+) as cofactor.

The enzyme catalyses (E)-sinapate + ATP + CoA = (E)-sinapoyl-CoA + AMP + diphosphate. It catalyses the reaction (E)-4-coumarate + ATP + CoA = (E)-4-coumaroyl-CoA + AMP + diphosphate. It carries out the reaction (E)-caffeate + ATP + CoA = (E)-caffeoyl-CoA + AMP + diphosphate. The catalysed reaction is (E)-ferulate + ATP + CoA = (E)-feruloyl-CoA + AMP + diphosphate. The enzyme catalyses (E)-sinapate + ATP + H(+) = (E)-sinapoyl-AMP + diphosphate. It catalyses the reaction (E)-sinapoyl-AMP + CoA = (E)-sinapoyl-CoA + AMP + H(+). It carries out the reaction (E)-4-coumarate + ATP + H(+) = (E)-4-coumaroyl-AMP + diphosphate. The catalysed reaction is (E)-4-coumaroyl-AMP + CoA = (E)-4-coumaroyl-CoA + AMP + H(+). The enzyme catalyses (E)-caffeate + ATP + H(+) = (E)-caffeoyl-AMP + diphosphate. It catalyses the reaction (E)-caffeoyl-AMP + CoA = (E)-caffeoyl-CoA + AMP + H(+). It carries out the reaction (E)-ferulate + ATP + H(+) = (E)-feruloyl-AMP + diphosphate. The catalysed reaction is (E)-feruloyl-AMP + CoA = (E)-feruloyl-CoA + AMP + H(+). It functions in the pathway phytoalexin biosynthesis; 3,4',5-trihydroxystilbene biosynthesis; 3,4',5-trihydroxystilbene from trans-4-coumarate: step 1/2. Functionally, produces CoA thioesters of a variety of hydroxy- and methoxy-substituted cinnamic acids, which are used to synthesize several phenylpropanoid-derived compounds, including anthocyanins, flavonoids, isoflavonoids, coumarins, lignin, suberin and wall-bound phenolics. Follows a two-step reaction mechanism, wherein the carboxylate substrate first undergoes adenylation by ATP, followed by a thioesterification in the presence of CoA to yield the final CoA thioesters. The sequence is that of 4-coumarate--CoA ligase 4 from Arabidopsis thaliana (Mouse-ear cress).